We begin with the raw amino-acid sequence, 202 residues long: tRNA (pseudouridine(54)-N(1))-methyltransferase (202 aa).

Positions 130, 152, and 185 each coordinate S-adenosyl-L-methionine.

It belongs to the methyltransferase superfamily. TrmY family. As to quaternary structure, homodimer.

Its subcellular location is the cytoplasm. The catalysed reaction is pseudouridine(54) in tRNA + S-adenosyl-L-methionine = N(1)-methylpseudouridine(54) in tRNA + S-adenosyl-L-homocysteine + H(+). Specifically catalyzes the N1-methylation of pseudouridine at position 54 (Psi54) in tRNAs. The sequence is that of tRNA (pseudouridine(54)-N(1))-methyltransferase from Methanococcoides burtonii (strain DSM 6242 / NBRC 107633 / OCM 468 / ACE-M).